Reading from the N-terminus, the 211-residue chain is Arginine exporter protein ArgO (211 aa).

The next 6 membrane-spanning stretches (helical) occupy residues 1–21 (MISYYFQGFALGVAMILPLGP), 37–57 (LMIALLCALSDLVLISAGIFG), 68–88 (LLALVTWGGVAFLLWYGFGAL), 111–131 (IIATMLAVTWLNPHVYLDTFV), 147–167 (WFALGTISASFLWFFGLALLA), and 179–199 (AQRIINILVGVVMWLIAFQLA).

Belongs to the LysE/ArgO transporter (TC 2.A.75) family.

The protein localises to the cell inner membrane. It catalyses the reaction L-arginine(in) = L-arginine(out). Involved in the export of arginine. Important to control the intracellular level of arginine and the correct balance between arginine and lysine. The polypeptide is Arginine exporter protein ArgO (Salmonella paratyphi A (strain ATCC 9150 / SARB42)).